The sequence spans 344 residues: Small ribosomal subunit protein uS3 (344 aa).

One can recognise a KH type-2 domain in the interval 38 to 106; that stretch reads LKAALRERLK…EVFIDIQEVH (69 aa). The tract at residues 217-344 is disordered; sequence PEPEPRREQR…QKPEGSGENQ (128 aa). Composition is skewed to basic and acidic residues over residues 219 to 259 and 335 to 344; these read PEPR…RGDR and QKPEGSGENQ.

Belongs to the universal ribosomal protein uS3 family. In terms of assembly, part of the 30S ribosomal subunit. Forms a tight complex with proteins S10 and S14.

In terms of biological role, binds the lower part of the 30S subunit head. Binds mRNA in the 70S ribosome, positioning it for translation. This is Small ribosomal subunit protein uS3 from Solibacter usitatus (strain Ellin6076).